The following is a 310-amino-acid chain: 4-hydroxyproline 2-epimerase (310 aa).

C88 serves as the catalytic Proton acceptor. Residues 89–90 (GH), H208, and D232 contribute to the substrate site. The Proton donor role is filled by C236. Residue 237 to 238 (GT) coordinates substrate.

This sequence belongs to the proline racemase family.

The catalysed reaction is trans-4-hydroxy-L-proline = cis-4-hydroxy-D-proline. Functionally, catalyzes the epimerization of trans-4-hydroxy-L-proline (t4LHyp) to cis-4-hydroxy-D-proline (c4DHyp). Is likely involved in a degradation pathway that converts t4LHyp to alpha-ketoglutarate. Displays no proline racemase activity. This Acinetobacter baumannii (strain ATCC 17978 / DSM 105126 / CIP 53.77 / LMG 1025 / NCDC KC755 / 5377) protein is 4-hydroxyproline 2-epimerase.